Consider the following 338-residue polypeptide: Anthranilate phosphoribosyltransferase (338 aa).

5-phospho-alpha-D-ribose 1-diphosphate is bound by residues Gly81, 84–85 (GD), Thr89, 91–94 (NIST), 109–117 (KHGNRALSS), and Ala121. An anthranilate-binding site is contributed by Gly81. Position 93 (Ser93) interacts with Mg(2+). Position 112 (Asn112) interacts with anthranilate. Arg167 serves as a coordination point for anthranilate. Mg(2+)-binding residues include Asp225 and Glu226.

Belongs to the anthranilate phosphoribosyltransferase family. As to quaternary structure, homodimer. Mg(2+) is required as a cofactor.

The enzyme catalyses N-(5-phospho-beta-D-ribosyl)anthranilate + diphosphate = 5-phospho-alpha-D-ribose 1-diphosphate + anthranilate. It functions in the pathway amino-acid biosynthesis; L-tryptophan biosynthesis; L-tryptophan from chorismate: step 2/5. Its function is as follows. Catalyzes the transfer of the phosphoribosyl group of 5-phosphorylribose-1-pyrophosphate (PRPP) to anthranilate to yield N-(5'-phosphoribosyl)-anthranilate (PRA). The protein is Anthranilate phosphoribosyltransferase of Rhizobium johnstonii (strain DSM 114642 / LMG 32736 / 3841) (Rhizobium leguminosarum bv. viciae).